A 224-amino-acid chain; its full sequence is Inhibitor of apoptosis protein (224 aa).

The BIR repeat unit spans residues 29 to 92 (VDARNQSFAI…AFWSRNCGFM (64 aa)). Cys-62, Cys-65, His-82, and Cys-89 together coordinate Zn(2+).

The protein belongs to the asfivirus IAP family. Interacts with subunit p17 of host CASP3.

It is found in the host cytoplasm. The protein resides in the virion. Its function is as follows. Prevents apoptosis of host cell by inhibiting caspase-3/CASP3 activation to promote the viral replication. Also induces the activation of host NF-kappaB. This is Inhibitor of apoptosis protein (p27) from African swine fever virus (isolate Tick/South Africa/Wildebeeslaagte M1/1996) (ASFV).